The following is a 150-amino-acid chain: S-protein homolog 24 (150 aa).

The N-linked (GlcNAc...) asparagine glycan is linked to Asn122.

The protein belongs to the plant self-incompatibility (S1) protein family.

Its subcellular location is the secreted. In Arabidopsis thaliana (Mouse-ear cress), this protein is S-protein homolog 24.